Reading from the N-terminus, the 1250-residue chain is Immunoglobulin superfamily DCC subclass member 4 (1250 aa).

The N-terminal stretch at 1–24 is a signal peptide; sequence MARGDAGRGRGLLALTFCLLAARG. Topologically, residues 25–957 are extracellular; sequence ELLLPQETTV…SDSLDMHSVT (933 aa). 4 Ig-like C2-type domains span residues 29–137, 143–229, 242–330, and 335–421; these read PQET…TAVV, ADFS…ALLS, QDVV…AELR, and PAIT…ASLA. Cys57 and Cys121 are oxidised to a cystine. Asn90, Asn102, and Asn157 each carry an N-linked (GlcNAc...) asparagine glycan. Cys164 and Cys212 are joined by a disulfide. N-linked (GlcNAc...) asparagine glycosylation is present at Asn252. 2 cysteine pairs are disulfide-bonded: Cys265-Cys312 and Cys356-Cys405. Fibronectin type-III domains are found at residues 431–525, 527–623, 632–741, 752–845, and 850–945; these read APTR…TLDD, PSAA…TPSM, APAE…APAP, PPAH…TLPD, and PPSD…TLQE. Asn582 is a glycosylation site (N-linked (GlcNAc...) asparagine). Residues 958-978 traverse the membrane as a helical segment; the sequence is GIIVGVCLGLLCLLACMCAGL. The Cytoplasmic portion of the chain corresponds to 979–1250; it reads RRSPHRESLP…LPRSPVSSSA (272 aa). Position 995 is a phosphothreonine (Thr995). Disordered stretches follow at residues 1140–1175 and 1215–1250; these read SASN…DPGQ and PGEV…SSSA.

The protein belongs to the immunoglobulin superfamily. DCC family.

The protein resides in the cell membrane. This chain is Immunoglobulin superfamily DCC subclass member 4 (IGDCC4), found in Homo sapiens (Human).